A 429-amino-acid chain; its full sequence is MGNSGDLEQALQDGNIFRQLNALIVAHLRHHNLSQVASAVASATMTPLNIEVPPNRLLELVAKGLAAENNGTLRGVSSSVLLPSSYGSITTPRTASIDFSVNHAKGSSKTIPKHESKTLSEHKSVVRCARFSPDGMFFATGGADTSIKLFEVPKVKQMISGDTQARPLIRTFYDHAEPINDLDFHPRSTILISSAKDNCIKFFDFSKTTAKRAFKVFQDTHNVRSISFHPSGEFLLAGTDHPIPHLYDVNTYQCFLPSNFPDSGVSGAINQVRYSSTGSIYITASKDGAIRLFDGVSAKCVRSIGNAHGKSEVTSAVFTKDQRFVLSSGKDSTVKLWEIGSGRMVKEYLGAKRVKLRSQAIFNDTEEFVISIDEASNEVVTWDARTADKVAKWPSNHNGAPRWIEHSPVESVFVTCGIDRSIRFWKESV.

Residues 20 to 41 (LNALIVAHLRHHNLSQVASAVA) are hydrophobic. WD repeat units lie at residues 121 to 160 (EHKS…QMIS), 174 to 213 (DHAE…AKRA), 218 to 257 (QDTH…CFLP), 264 to 303 (GVSG…CVRS), 308 to 347 (HGKS…MVKE), 351 to 392 (AKRV…KVAK), and 396 to 429 (NHNG…KESV).

In terms of assembly, homodimer. Belongs to the CSTF complex. Forms a complex with cleavage and polyadenylation specificity factor (CPSF) subunits CSTF64, PABN3, CPSF30, FIPS5 and CPSF100.

Its subcellular location is the nucleus. Its function is as follows. One of the multiple factors required for polyadenylation and 3'-end cleavage of pre-mRNAs. May be responsible for the interaction of CSTF with other factors to form a stable complex on the pre-mRNA. This is Cleavage stimulation factor subunit 50 from Arabidopsis thaliana (Mouse-ear cress).